The primary structure comprises 302 residues: Acetylglutamate kinase (302 aa).

Substrate contacts are provided by residues 75–76 (GG), Arg97, and Asn198.

It belongs to the acetylglutamate kinase family. ArgB subfamily.

It is found in the cytoplasm. The enzyme catalyses N-acetyl-L-glutamate + ATP = N-acetyl-L-glutamyl 5-phosphate + ADP. Its pathway is amino-acid biosynthesis; L-arginine biosynthesis; N(2)-acetyl-L-ornithine from L-glutamate: step 2/4. In terms of biological role, catalyzes the ATP-dependent phosphorylation of N-acetyl-L-glutamate. The protein is Acetylglutamate kinase of Leifsonia xyli subsp. xyli (strain CTCB07).